The chain runs to 175 residues: Protein-export protein SecB (175 aa).

The protein belongs to the SecB family. Homotetramer, a dimer of dimers. One homotetramer interacts with 1 SecA dimer.

Its subcellular location is the cytoplasm. Its function is as follows. One of the proteins required for the normal export of preproteins out of the cell cytoplasm. It is a molecular chaperone that binds to a subset of precursor proteins, maintaining them in a translocation-competent state. It also specifically binds to its receptor SecA. The polypeptide is Protein-export protein SecB (Ehrlichia chaffeensis (strain ATCC CRL-10679 / Arkansas)).